A 257-amino-acid chain; its full sequence is DNA repair protein RecO (257 aa).

This sequence belongs to the RecO family.

Functionally, involved in DNA repair and RecF pathway recombination. The protein is DNA repair protein RecO of Synechococcus sp. (strain CC9605).